We begin with the raw amino-acid sequence, 1013 residues long: RNA-binding protein 44 (1013 aa).

Disordered regions lie at residues M1–D25 and L56–Q94. The span at L56 to S76 shows a compositional bias: basic and acidic residues. Polar residues predominate over residues L78 to Q94. S365, S368, S510, S681, and S688 each carry phosphoserine. One can recognise an RRM domain in the interval F792–I865. Residues R905–G925 are disordered.

Homodimer. Interacts with TEX14. As to expression, highly expressed in testis. Also expressed in other tissues at lower level.

The protein resides in the cytoplasm. In terms of biological role, component of intercellular bridges during meiosis. Intercellular bridges are evolutionarily conserved structures that connect differentiating germ cells. Not required for fertility. The chain is RNA-binding protein 44 (Rbm44) from Mus musculus (Mouse).